Reading from the N-terminus, the 79-residue chain is MDISKMDRYAAPVHFSSLPLLATVLCGVGLLLLAAFTMLQVTSTKYNRNVFKELFIAATSSIFLGFGSVFLLLWVGIYV.

Helical transmembrane passes span 18-38 (LPLL…AFTM) and 55-75 (FIAA…LLWV).

It belongs to the OST5 family. Component of the oligosaccharyltransferase (OST) complex.

It is found in the membrane. Its pathway is protein modification; protein glycosylation. Its function is as follows. Subunit of the oligosaccharyl transferase (OST) complex that catalyzes the initial transfer of a defined glycan (Glc(3)Man(9)GlcNAc(2) in eukaryotes) from the lipid carrier dolichol-pyrophosphate to an asparagine residue within an Asn-X-Ser/Thr consensus motif in nascent polypeptide chains, the first step in protein N-glycosylation. N-glycosylation occurs cotranslationally and the complex associates with the Sec61 complex at the channel-forming translocon complex that mediates protein translocation across the endoplasmic reticulum (ER). All subunits are required for a maximal enzyme activity. The sequence is that of Dolichyl-diphosphooligosaccharide--protein glycosyltransferase subunit TMEM258 from Caenorhabditis briggsae.